The sequence spans 656 residues: Rab proteins geranylgeranyltransferase component A 2 (656 aa).

Disordered stretches follow at residues 188 to 209 and 609 to 656; these read MHTV…EDKA and PPPN…HLQN. Residues 639–656 are compositionally biased toward basic and acidic residues; it reads ESSEESKNLESPEKHLQN. A Phosphoserine modification is found at S649.

It belongs to the Rab GDI family. As to quaternary structure, monomer. Heterotrimer composed of RABGGTA, RABGGTB and CHML; within this trimer, RABGGTA and RABGGTB form the catalytic component B, while CHML (component A) mediates Rab protein binding. Interacts with RAB1A, RAB7A and RAB27A, but has much lower affinity for RAB1A, RAB7A and RAB27A than CHM. Interacts with the non-phosphorylated forms of RAB3A, RAB3B, RAB3C, RAB3D, RAB5B, RAB5C, RAB8A, RAB8B, RAB10, RAB12, RAB35, and RAB43.

The protein localises to the cytoplasm. It is found in the cytosol. Its function is as follows. Substrate-binding subunit (component A) of the Rab geranylgeranyltransferase (GGTase) complex. Binds unprenylated Rab proteins and presents the substrate peptide to the catalytic component B. The component A is thought to be regenerated by transferring its prenylated Rab back to the donor membrane. Less effective than CHM in supporting prenylation of Rab3 family. The protein is Rab proteins geranylgeranyltransferase component A 2 (CHML) of Homo sapiens (Human).